We begin with the raw amino-acid sequence, 192 residues long: MNSSMASAGLGSRRKDPVYRGIRCRSGKWVSEIREPRKTTRIWLGTYPMAEMAAAAYDVAAMALKGREAVLNFPGSVGSYPVPESTSAADIRAAAAAAAAMKGCEEGEEEKKAKEKKSSSSKSRARECHVDNDVGSSSWCGTEFMDEEEVLNMPNLLANMAEGMMVAPPSWMGSRPSDDSPENSNDEDLWGY.

The segment at residues 18–74 (VYRGIRCRSGKWVSEIREPRKTTRIWLGTYPMAEMAAAAYDVAAMALKGREAVLNFP) is a DNA-binding region (AP2/ERF). Disordered stretches follow at residues 104–132 (CEEG…HVDN) and 167–192 (APPS…LWGY). Residues 179–192 (DSPENSNDEDLWGY) show a composition bias toward acidic residues.

Belongs to the AP2/ERF transcription factor family. ERF subfamily.

Its subcellular location is the nucleus. Probably acts as a transcriptional activator. Binds to the GCC-box pathogenesis-related promoter element. May be involved in the regulation of gene expression by stress factors and by components of stress signal transduction pathways. In Arabidopsis thaliana (Mouse-ear cress), this protein is Ethylene-responsive transcription factor ERF027 (ERF027).